Consider the following 887-residue polypeptide: Endoglucanase 1 (887 aa).

A signal peptide spans 1 to 55 (MRLVNSLGRRKILLILAVIVAFSTVLLFAKLWGRKTSSTLDEVGSKTHGDLTAEN). The tract at residues 40–66 (LDEVGSKTHGDLTAENKNGGYLPEEEI) is disordered. Residues 43–53 (VGSKTHGDLTA) show a composition bias toward basic and acidic residues. Positions 56 to 518 (KNGGYLPEEE…AKMYKLYGGS (463 aa)) are catalytic. The active-site Nucleophile is the D131. The tract at residues 441 to 460 (ENPPKRPHHRTAHGSWADSQ) is disordered. Residues H448, D486, and E495 contribute to the active site. The CBM3 1 domain maps to 529-684 (VPEDEIFVEA…GVLVFGREPG (156 aa)). A disordered region spans residues 684-730 (GSASKSTSKDNGLSKATPTVKTESQPTAKHTQNPASDFKTPANQNSV). Residues 686-729 (ASKSTSKDNGLSKATPTVKTESQPTAKHTQNPASDFKTPANQNS) show a composition bias toward polar residues. The CBM3 2 domain occupies 736-887 (IKGEVVLQYA…SNKLVYGKEP (152 aa)).

The protein belongs to the glycosyl hydrolase 9 (cellulase E) family.

It catalyses the reaction Endohydrolysis of (1-&gt;4)-beta-D-glucosidic linkages in cellulose, lichenin and cereal beta-D-glucans.. The protein operates within glycan metabolism; cellulose degradation. In terms of biological role, this enzyme catalyzes the endohydrolysis of 1,4-beta-glucosidic linkages in cellulose, lichenin and cereal beta-D-glucans. Principally active against barley beta-glucan. This chain is Endoglucanase 1 (celI), found in Acetivibrio thermocellus (strain ATCC 27405 / DSM 1237 / JCM 9322 / NBRC 103400 / NCIMB 10682 / NRRL B-4536 / VPI 7372) (Clostridium thermocellum).